The following is a 454-amino-acid chain: Allantoinase (454 aa).

Residues histidine 58, histidine 60, lysine 149, histidine 189, histidine 245, and aspartate 318 each contribute to the Zn(2+) site. At lysine 149 the chain carries N6-carboxylysine.

It belongs to the metallo-dependent hydrolases superfamily. Allantoinase family. In terms of assembly, homotetramer. Zn(2+) is required as a cofactor. In terms of processing, carboxylation allows a single lysine to coordinate two zinc ions.

The catalysed reaction is (S)-allantoin + H2O = allantoate + H(+). It participates in nitrogen metabolism; (S)-allantoin degradation; allantoate from (S)-allantoin: step 1/1. In terms of biological role, catalyzes the conversion of allantoin (5-ureidohydantoin) to allantoic acid by hydrolytic cleavage of the five-member hydantoin ring. In Enterococcus faecalis (strain ATCC 700802 / V583), this protein is Allantoinase.